A 323-amino-acid polypeptide reads, in one-letter code: uncharacterized protein (323 aa).

Belongs to the glycosyltransferase 2 family.

This is an uncharacterized protein from Haemophilus influenzae (strain ATCC 51907 / DSM 11121 / KW20 / Rd).